Reading from the N-terminus, the 304-residue chain is RNA polymerase II holoenzyme cyclin-like subunit (304 aa).

A Cyclin N-terminal domain is found at 43–174; sequence TIHDSKANKQ…LIEELQSYLI (132 aa).

It belongs to the cyclin family. Cyclin C subfamily. As to quaternary structure, component of the SRB8-11 complex, a regulatory module of the Mediator complex.

It localises to the nucleus. Component of the SRB8-11 complex. The SRB8-11 complex is a regulatory module of the Mediator complex which is itself involved in regulation of basal and activated RNA polymerase II-dependent transcription. The SRB8-11 complex may be involved in the transcriptional repression of a subset of genes regulated by Mediator. It may inhibit the association of the Mediator complex with RNA polymerase II to form the holoenzyme complex. The SRB8-11 complex phosphorylates the C-terminal domain (CTD) of the largest subunit of RNA polymerase II. The protein is RNA polymerase II holoenzyme cyclin-like subunit (SSN8) of Kluyveromyces lactis (strain ATCC 8585 / CBS 2359 / DSM 70799 / NBRC 1267 / NRRL Y-1140 / WM37) (Yeast).